An 886-amino-acid polypeptide reads, in one-letter code: Valine--tRNA ligase (886 aa).

The short motif at 53 to 63 is the 'HIGH' region element; it reads PNVTGSLHMGH. A 'KMSKS' region motif is present at residues 540–544; the sequence is KMSKS. Lys-543 contributes to the ATP binding site. Positions 819–851 form a coiled coil; sequence TIDVAAERRRLEKELAGAQKELASTAAKLANAD.

It belongs to the class-I aminoacyl-tRNA synthetase family. ValS type 1 subfamily. In terms of assembly, monomer.

The protein resides in the cytoplasm. The enzyme catalyses tRNA(Val) + L-valine + ATP = L-valyl-tRNA(Val) + AMP + diphosphate. Its function is as follows. Catalyzes the attachment of valine to tRNA(Val). As ValRS can inadvertently accommodate and process structurally similar amino acids such as threonine, to avoid such errors, it has a 'posttransfer' editing activity that hydrolyzes mischarged Thr-tRNA(Val) in a tRNA-dependent manner. In Mycobacterium tuberculosis (strain CDC 1551 / Oshkosh), this protein is Valine--tRNA ligase.